We begin with the raw amino-acid sequence, 197 residues long: Putative double homeobox protein 3 (197 aa).

DNA-binding regions (homeobox) lie at residues 46 to 105 and 121 to 180; these read GRRM…LRQH and GRRK…WGQS. The tract at residues 102–127 is disordered; the sequence is LRQHRRQSRPWPGRRDPQKGRRKRTA.

It belongs to the paired homeobox family. As to expression, expressed in hepatoma Hep3B cells.

The protein localises to the nucleus. The polypeptide is Putative double homeobox protein 3 (DUX3) (Homo sapiens (Human)).